The chain runs to 360 residues: Phospho-N-acetylmuramoyl-pentapeptide-transferase (360 aa).

The next 10 helical transmembrane spans lie at 27 to 47 (GAMI…INSL), 71 to 91 (TPTM…LLWA), 93 to 113 (LASV…AIGF), 128 to 148 (FSGK…AFTI), 168 to 188 (LVIN…VGAG), 199 to 219 (GLAI…AYLS), 239 to 259 (LAVV…FNAP), 262 to 282 (AIFM…TVAV), 288 to 308 (IVLA…IIQV), and 337 to 357 (QVVI…LSTL).

It belongs to the glycosyltransferase 4 family. MraY subfamily. Requires Mg(2+) as cofactor.

It is found in the cell inner membrane. The enzyme catalyses UDP-N-acetyl-alpha-D-muramoyl-L-alanyl-gamma-D-glutamyl-meso-2,6-diaminopimeloyl-D-alanyl-D-alanine + di-trans,octa-cis-undecaprenyl phosphate = di-trans,octa-cis-undecaprenyl diphospho-N-acetyl-alpha-D-muramoyl-L-alanyl-D-glutamyl-meso-2,6-diaminopimeloyl-D-alanyl-D-alanine + UMP. It participates in cell wall biogenesis; peptidoglycan biosynthesis. In terms of biological role, catalyzes the initial step of the lipid cycle reactions in the biosynthesis of the cell wall peptidoglycan: transfers peptidoglycan precursor phospho-MurNAc-pentapeptide from UDP-MurNAc-pentapeptide onto the lipid carrier undecaprenyl phosphate, yielding undecaprenyl-pyrophosphoryl-MurNAc-pentapeptide, known as lipid I. The polypeptide is Phospho-N-acetylmuramoyl-pentapeptide-transferase (Brucella ovis (strain ATCC 25840 / 63/290 / NCTC 10512)).